The chain runs to 421 residues: ATP-dependent RNA helicase RhlB (421 aa).

A Q motif motif is present at residues 9–37 (QKFSDFALHPAVIEALEKKGFHNCTPIQA). A Helicase ATP-binding domain is found at 40–219 (LPLTLEGRDV…FEQMNNAEYV (180 aa)). ATP is bound at residue 53-60 (AQTGTGKT). Positions 165 to 168 (DEAD) match the DEAD box motif. Residues 245-390 (RLLQTLLEEE…VSKYNPDALM (146 aa)) enclose the Helicase C-terminal domain. The disordered stretch occupies residues 396 to 421 (PLRLTRARPGNGPRRNGPPRNRRRSG). Positions 403–414 (RPGNGPRRNGPP) are enriched in low complexity.

The protein belongs to the DEAD box helicase family. RhlB subfamily. Component of the RNA degradosome, which is a multiprotein complex involved in RNA processing and mRNA degradation.

It localises to the cytoplasm. The enzyme catalyses ATP + H2O = ADP + phosphate + H(+). DEAD-box RNA helicase involved in RNA degradation. Has RNA-dependent ATPase activity and unwinds double-stranded RNA. The sequence is that of ATP-dependent RNA helicase RhlB from Klebsiella pneumoniae subsp. pneumoniae (strain ATCC 700721 / MGH 78578).